The sequence spans 298 residues: Probable endonuclease LCL3 (298 aa).

A disordered region spans residues Met-1 to Glu-24. The chain crosses the membrane as a helical span at residues Leu-39–Tyr-56. Residues Arg-77–Lys-262 form the TNase-like domain. Arg-153 is a catalytic residue. Position 158 (Asp-158) interacts with Ca(2+). Residues Glu-161 and Arg-201 contribute to the active site. The interval Leu-269–Trp-298 is disordered. The span at Glu-278–Trp-298 shows a compositional bias: basic and acidic residues.

Belongs to the LCL3 family.

It is found in the mitochondrion. Its subcellular location is the membrane. This chain is Probable endonuclease LCL3 (LCL3), found in Leptosphaeria maculans (strain JN3 / isolate v23.1.3 / race Av1-4-5-6-7-8) (Blackleg fungus).